Here is a 187-residue protein sequence, read N- to C-terminus: ATP-dependent protease subunit HslV (187 aa).

Thr-13 is an active-site residue. Residues Ala-172, Cys-175, and Thr-178 each contribute to the Na(+) site.

This sequence belongs to the peptidase T1B family. HslV subfamily. As to quaternary structure, a double ring-shaped homohexamer of HslV is capped on each side by a ring-shaped HslU homohexamer. The assembly of the HslU/HslV complex is dependent on binding of ATP.

It is found in the cytoplasm. It carries out the reaction ATP-dependent cleavage of peptide bonds with broad specificity.. Allosterically activated by HslU binding. Functionally, protease subunit of a proteasome-like degradation complex believed to be a general protein degrading machinery. The protein is ATP-dependent protease subunit HslV of Caulobacter sp. (strain K31).